Reading from the N-terminus, the 207-residue chain is C-type lectin domain family 2 member D11 (207 aa).

Over 1–44 (MSAKKASQPMLNTTGSLQEGEMGKMFHGKCLRIVSPESPAKLYC) the chain is Cytoplasmic. Ser-7 and Ser-16 each carry phosphoserine. The helical; Signal-anchor for type II membrane protein transmembrane segment at 45-65 (CYGVIMVLSVAVVALSVALSV) threads the bilayer. The Extracellular portion of the chain corresponds to 66–207 (KMTPQISTIN…LQCKTPFSPM (142 aa)). The region spanning 87–198 (VGNKCFYFSE…SCSKLNSYSL (112 aa)) is the C-type lectin domain. The N-linked (GlcNAc...) asparagine glycan is linked to Asn-100.

It localises to the cell membrane. Receptor for KLRB1B that protects target cells against natural killer cell-mediated lysis. The polypeptide is C-type lectin domain family 2 member D11 (Clec2d11) (Rattus norvegicus (Rat)).